The primary structure comprises 334 residues: Forkhead box protein N2 (334 aa).

Disordered stretches follow at residues 1 to 52 (MGPV…SGTT) and 83 to 108 (SPLY…ASSK). Positions 108–204 (KPPYSFSLLI…QALKKQPFSS (97 aa)) form a DNA-binding region, fork-head.

It localises to the nucleus. The sequence is that of Forkhead box protein N2 from Xenopus tropicalis (Western clawed frog).